The primary structure comprises 524 residues: Protopine 6-monooxygenase (524 aa).

The next 3 helical transmembrane spans lie at L4–Y24, L232–Q252, and M319–M339. C462 is a binding site for heme.

It belongs to the cytochrome P450 family. Requires heme as cofactor.

It localises to the endoplasmic reticulum membrane. The enzyme catalyses protopine + reduced [NADPH--hemoprotein reductase] + O2 = 6-hydroxyprotopine + oxidized [NADPH--hemoprotein reductase] + H2O + H(+). It participates in alkaloid biosynthesis. Catalyzes the conversion of protopine and allocryptopine to dihydrosanguinarine and dihydrochelerythrine, respectively, in the biosynthesis of isoquinoline alkaloid sanguinarine. The protein is Protopine 6-monooxygenase (CYP82N2v2) of Eschscholzia californica (California poppy).